Here is a 156-residue protein sequence, read N- to C-terminus: MEKTFPMTKEGLDKLKAELENLKLVKRPEVIDRIKVARSYGDLSENSEYEAAKDEQAFIEGRISTVETMIRYAEIVNNAKIAKDEVALGKNVTFVEVGETDEESYQIVGTAEADPFTGKISNESPIARVLIGKKVGDIVNVPLPVGEMTVKIVKVD.

Positions 2–27 (EKTFPMTKEGLDKLKAELENLKLVKR) form a coiled coil.

This sequence belongs to the GreA/GreB family.

Functionally, necessary for efficient RNA polymerase transcription elongation past template-encoded arresting sites. The arresting sites in DNA have the property of trapping a certain fraction of elongating RNA polymerases that pass through, resulting in locked ternary complexes. Cleavage of the nascent transcript by cleavage factors such as GreA or GreB allows the resumption of elongation from the new 3'terminus. GreA releases sequences of 2 to 3 nucleotides. The chain is Transcription elongation factor GreA from Lactococcus lactis subsp. cremoris (strain SK11).